The following is an 84-amino-acid chain: Cell division topological specificity factor (84 aa).

This sequence belongs to the MinE family.

Functionally, prevents the cell division inhibition by proteins MinC and MinD at internal division sites while permitting inhibition at polar sites. This ensures cell division at the proper site by restricting the formation of a division septum at the midpoint of the long axis of the cell. The protein is Cell division topological specificity factor of Pseudomonas fluorescens (strain ATCC BAA-477 / NRRL B-23932 / Pf-5).